Here is a 640-residue protein sequence, read N- to C-terminus: MKIKVVLPDGSEREYEKGTKPMEIAREVGIKKVIGAVVDEELWDLKRPLERDCRIRFVTLEDPEAPEFYRHTMAHILAQAVMRLYGKENVKLGIGPTIENGFYYDFDIRNGKLTEEDLPRIEQEMKKIIKENLPIEREEISKDEAKEIFKDQPYKLELIEEIEGDTVTIYRQGEFVDLCRGPHLPSTGVVKHFKLLSVSGAYWRGSEKNPMLTRVYGTAFAKKEDLENYLKFLEEAQKRDHRKLGPQLELFMLNTDYAPGMPFFLPRGVIVLNELMNFSRELHRERGYQEIFTPLIMNEQLWRISGHWDHYAENMYFIEKGEERYAVKPMNCPGHILVYKSRAVSYRDLPLRFFEFGRVHRYERSGVLHGLMRVRSFTQDDAHIFCTPDQIEDEILGVLELINTIYSQFGFTYRVELSTMPEDHMGDEAIWEKATNALKKALDRAGLPYRVNEGEGAFYGPKIDFHIKDSLGREWQCATIQLDFMMPEKFNVTYIGPDNREHTAVMIHRAIYGSLERFFGILIEHFAGAFPTWIAPVQVAVIPISDKHSEGAKKVATMLSREGFRVFLDDRRETLGYRIRQAQIQKIPYMVVLGDRELESGKLSVRTRSGKEIKDVEMDHFIDTLKKEVRDRKLELTLEG.

A TGS domain is found at 1 to 59 (MKIKVVLPDGSEREYEKGTKPMEIAREVGIKKVIGAVVDEELWDLKRPLERDCRIRFVT). Residues 240–531 (DHRKLGPQLE…LIEHFAGAFP (292 aa)) are catalytic. Zn(2+)-binding residues include Cys-332, His-383, and His-508.

This sequence belongs to the class-II aminoacyl-tRNA synthetase family. Homodimer. Zn(2+) serves as cofactor.

It is found in the cytoplasm. It catalyses the reaction tRNA(Thr) + L-threonine + ATP = L-threonyl-tRNA(Thr) + AMP + diphosphate + H(+). Its function is as follows. Catalyzes the attachment of threonine to tRNA(Thr) in a two-step reaction: L-threonine is first activated by ATP to form Thr-AMP and then transferred to the acceptor end of tRNA(Thr). Also edits incorrectly charged L-seryl-tRNA(Thr). This is Threonine--tRNA ligase from Thermotoga neapolitana (strain ATCC 49049 / DSM 4359 / NBRC 107923 / NS-E).